Reading from the N-terminus, the 313-residue chain is MEGTWIEVRVITKSEALEPISGIFYGLDCKGVAIEDPNDILGREQGPLTWDFADINILEHKGKVAVVKGYFSEEDNIDDVIAYVKERVEELKESGLDVGEGTVEAEKMFEEDWANNWKKYYKPIKIGEKIVIKPIWEEYEPTGEEMVVELDPGMAFGTGDHETTRMCVQALDKYVKADTTVFDIGTGSGILALVASKLGAKHVVGVDLDPVAVDSAKENISFNNVDNIEVLYGNLLDVVDGKADIVVANIIAEIICILVDDVKKALNKDGIFITSGIIHERRQMVIDKLEQEGFEVMEVNKDGEWNCIVAKLK.

Positions 164, 185, 207, and 249 each coordinate S-adenosyl-L-methionine.

It belongs to the methyltransferase superfamily. PrmA family.

It is found in the cytoplasm. The enzyme catalyses L-lysyl-[protein] + 3 S-adenosyl-L-methionine = N(6),N(6),N(6)-trimethyl-L-lysyl-[protein] + 3 S-adenosyl-L-homocysteine + 3 H(+). Its function is as follows. Methylates ribosomal protein L11. In Clostridium perfringens (strain 13 / Type A), this protein is Ribosomal protein L11 methyltransferase.